The sequence spans 1033 residues: TBC domain-containing protein kinase-like protein (1033 aa).

Disordered regions lie at residues 1–21 (MMKS…YKFK), 35–55 (YDNN…NTVT), and 81–101 (GSIG…TPKP). Composition is skewed to low complexity over residues 36–52 (DNNN…DDNN) and 81–97 (GSIG…NSVS). The 354-residue stretch at 72-425 (NKLTINQNNG…SETLLDHPYF (354 aa)) folds into the Protein kinase domain. ATP-binding positions include 78-86 (QNNGSIGGS) and K113. Polar residues predominate over residues 535-546 (STNSGLNSPQPY). A disordered region spans residues 535–560 (STNSGLNSPQPYQHQHHQHQHQHQHP). Positions 548-558 (HQHHQHQHQHQ) are enriched in basic residues. The 188-residue stretch at 657–844 (FVPPILRGDI…ILWDSILLCP (188 aa)) folds into the Rab-GAP TBC domain.

Belongs to the protein kinase superfamily. Ser/Thr protein kinase family.

This chain is TBC domain-containing protein kinase-like protein (tbck), found in Dictyostelium discoideum (Social amoeba).